The primary structure comprises 273 residues: Putative phosphoenolpyruvate synthase regulatory protein (273 aa).

Glycine 153 to threonine 160 serves as a coordination point for ADP.

This sequence belongs to the pyruvate, phosphate/water dikinase regulatory protein family. PSRP subfamily.

The catalysed reaction is [pyruvate, water dikinase] + ADP = [pyruvate, water dikinase]-phosphate + AMP + H(+). It carries out the reaction [pyruvate, water dikinase]-phosphate + phosphate + H(+) = [pyruvate, water dikinase] + diphosphate. Functionally, bifunctional serine/threonine kinase and phosphorylase involved in the regulation of the phosphoenolpyruvate synthase (PEPS) by catalyzing its phosphorylation/dephosphorylation. This is Putative phosphoenolpyruvate synthase regulatory protein from Polaromonas sp. (strain JS666 / ATCC BAA-500).